We begin with the raw amino-acid sequence, 551 residues long: Interleukin-2 receptor subunit beta (551 aa).

The signal sequence occupies residues 1–26 (MATLALSWCLPLLILLLPLATSSASA). Topologically, residues 27–240 (AVNGTSRFTC…TKPAALGKDT (214 aa)) are extracellular. 3 N-linked (GlcNAc...) asparagine glycosylation sites follow: asparagine 29, asparagine 43, and asparagine 71. A disulfide bridge links cysteine 36 with cysteine 46. The cysteines at positions 74 and 86 are disulfide-linked. The region spanning 134–234 (APISLQVVHV…QPLAFRTKPA (101 aa)) is the Fibronectin type-III domain. An N-linked (GlcNAc...) asparagine glycan is attached at asparagine 149. The short motif at 220–224 (WSPWS) is the WSXWS motif element. The helical transmembrane segment at 241–265 (IPWLGHLLVGLSGAFGFIILVYLLI) threads the bilayer. The Cytoplasmic segment spans residues 266–551 (NCRNTGPWLK…LQDQDPTHLV (286 aa)). A Box 1 motif motif is present at residues 278 to 286 (LKCHTPDPS). Disordered stretches follow at residues 389 to 417 (EEEP…EDDA), 430 to 484 (FSPS…DLVD), and 496 to 517 (AGEQ…ARPP).

Belongs to the type I cytokine receptor family. Type 4 subfamily. Non-covalent dimer of an alpha and a beta subunit. IL2R exists in 3 different forms: a high affinity dimer, an intermediate affinity monomer (beta subunit), and a low affinity monomer (alpha subunit). The high and intermediate affinity forms also associate with a gamma subunit. Interacts with SHB upon interleukin stimulation.

The protein localises to the cell membrane. The protein resides in the cell surface. In terms of biological role, receptor for interleukin-2. This beta subunit is involved in receptor mediated endocytosis and transduces the mitogenic signals of IL2. Probably in association with IL15RA, involved in the stimulation of neutrophil phagocytosis by IL15. The protein is Interleukin-2 receptor subunit beta (IL2RB) of Macaca fascicularis (Crab-eating macaque).